The sequence spans 147 residues: MKIWVDADACPGVIREILFRAAQRTGVALTLVANQPVKVPPSPHIRSLQVSAGFDVADNEIVRRVSAGDLVITSDIPLAAEVIAKGGHALSPRGELHTRENIGARLNMRDFMDTLRASGIQSGGPPALNQKDRQAFANQLDRLLAKR.

It belongs to the UPF0178 family.

The polypeptide is UPF0178 protein Tgr7_2584 (Thioalkalivibrio sulfidiphilus (strain HL-EbGR7)).